The primary structure comprises 144 residues: RNA-binding protein 1 (144 aa).

The 74-residue stretch at 11–84 (CKVYVGNLGS…TRIRVEMSSG (74 aa)) folds into the RRM domain. Residues 78-115 (RVEMSSGRSRDRRRGEGGSSGRSGSGRYRITPSARTTS) are disordered.

It belongs to the splicing factor SR family. As to quaternary structure, interacts with x16 (via Arg/Ser-rich region). Extensively phosphorylated on serine residues in the RS domain. In terms of processing, the tandem heptapeptide repeats in the C-terminal domain (CTD) can be highly phosphorylated. The phosphorylation activates Pol II. Phosphorylation occurs at residues 'Ser-2', 'Ser-5' and 'Ser-7' of the heptapeptide repeat and is mediated by P-TEFb. Dephosphorylated by the INTAC complex when transcripts are unfavorably configured for transcriptional elongation, leading to premature transcription termination: dephosphorylation is mediated by the mts/PP2A component of the INTAC complex. Ubiquitous.

The protein resides in the nucleus. Functionally, contributes to the activation of female-specific DSX splicing in vivo by recognizing the RBP1 target sequences within the purine-rich polypyrimidine tract of the female-specific 3' splice site. The chain is RNA-binding protein 1 (Rbp1) from Drosophila melanogaster (Fruit fly).